Here is a 256-residue protein sequence, read N- to C-terminus: POU domain class 2-associating factor 1 (256 aa).

The tract at residues 1-23 (MLWQKPTAPEQAPAPPRPYQGVR) is disordered. An OCA domain is found at 16-38 (PRPYQGVRVKEPVKELLRRKRGH).

Belongs to the POU2AF family. Interacts with POU2F1/OCT1 and POU2F2/OCT2; the interaction increases POU2F1 and POU2F2 transactivation activity. Post-translationally, ubiquitinated; mediated by SIAH1 or SIAH2 and leading to its subsequent proteasomal degradation.

The protein localises to the nucleus. Functionally, transcriptional coactivator that specifically associates with either POU2F1/OCT1 or POU2F2/OCT2. It boosts the POU2F1/OCT1 mediated promoter activity and to a lesser extent, that of POU2F2/OCT2. It recognizes the POU domains of POU2F1/OCT1 and POU2F2/OCT2. It is essential for the response of B-cells to antigens and required for the formation of germinal centers. Regulates IL6 expression in B cells as POU2F2/OCT2 coactivator. The sequence is that of POU domain class 2-associating factor 1 (POU2AF1) from Bos taurus (Bovine).